Consider the following 766-residue polypeptide: BMP/retinoic acid-inducible neural-specific protein 3 (766 aa).

Positions 1–33 (MIWRRRAGAELSSLMALWEWIVLSLHCWVLAVA) are cleaved as a signal peptide. Positions 74–264 (RYKIYREFGR…FVQAALSYIA (191 aa)) constitute an MACPF domain. Residues Asn168, Asn337, Asn456, Asn562, Asn609, and Asn641 are each glycosylated (N-linked (GlcNAc...) asparagine).

This sequence belongs to the BRINP family. In terms of tissue distribution, expressed in the brain. Weakly expressed in embryonic stem (ES) cells. Expressed in ES-derived neural stem cells (NSCs) and neuronal cells.

It localises to the secreted. It is found in the mitochondrion. Its function is as follows. Inhibits neuronal cell proliferation by negative regulation of the cell cycle transition. Promotes pituitary gonadotrope cell proliferation, migration and invasion, when overexpressed. May play a role in cell pituitary tumor development. This chain is BMP/retinoic acid-inducible neural-specific protein 3 (Brinp3), found in Mus musculus (Mouse).